The following is a 358-amino-acid chain: Peptide chain release factor 1 (358 aa).

Gln233 carries the post-translational modification N5-methylglutamine.

Belongs to the prokaryotic/mitochondrial release factor family. Post-translationally, methylated by PrmC. Methylation increases the termination efficiency of RF1.

The protein localises to the cytoplasm. Functionally, peptide chain release factor 1 directs the termination of translation in response to the peptide chain termination codons UAG and UAA. The sequence is that of Peptide chain release factor 1 from Brevibacillus brevis (strain 47 / JCM 6285 / NBRC 100599).